The following is a 763-amino-acid chain: Dual specificity tyrosine-phosphorylation-regulated kinase 1A (763 aa).

The residue at position 14 (Ser14) is a Phosphoserine. Residues 33–56 (QMPHSHQYSDRRQPNISDQQVSAL) form a disordered region. Polar residues predominate over residues 46–56 (PNISDQQVSAL). The residue at position 111 (Tyr111) is a Phosphotyrosine; by autocatalysis. The interval 115–136 (KKRRHQQGQGDDSSHKKERKVY) is disordered. Positions 117–134 (RRHQQGQGDDSSHKKERK) match the Bipartite nuclear localization signal motif. Tyr140 is modified (phosphotyrosine; by autocatalysis). A Phosphotyrosine modification is found at Tyr145. Tyr159 carries the phosphotyrosine; by autocatalysis modification. The Protein kinase domain occupies 159-479 (YEIDSLIGKG…PYYALQHSFF (321 aa)). An ATP-binding site is contributed by 165-173 (IGKGSFGQV). At Tyr177 the chain carries Phosphotyrosine; by autocatalysis. Lys188 contacts ATP. A Phosphotyrosine; by autocatalysis modification is found at Tyr219. ATP is bound at residue 238-241 (FEML). Asp287 acts as the Proton acceptor in catalysis. At Ser310 the chain carries Phosphoserine; by autocatalysis. Phosphotyrosine; by autocatalysis occurs at positions 319 and 321. Thr402 is modified (phosphothreonine; by autocatalysis). Residues 408 to 442 (TKDGKREYKPPGTRKLHNILGVETGGPGGRRAGES) form a disordered region. Tyr449 carries the post-translational modification Phosphotyrosine; by autocatalysis. The segment covering 485 to 501 (EGTNTSNSVSTSPAMEQ) has biased composition (polar residues). Disordered stretches follow at residues 485–540 (EGTN…HSGG), 596–679 (NALH…GNQA), and 744–763 (DREE…VASS). Residues 502–525 (SQSSGTTSSTSSSSGGSSGTSNSG) are compositionally biased toward low complexity. Ser529 and Ser538 each carry phosphoserine. The tract at residues 595-625 (QNALHHHHGNSSHHHHHHHHHHHHHGQQALG) is histidine-rich domain (HRD). Over residues 598-620 (LHHHHGNSSHHHHHHHHHHHHHG) the composition is skewed to basic residues. Over residues 634 to 645 (NSPTNSSSTQDS) the composition is skewed to polar residues. Over residues 654–672 (SMTSLSSSTTSSSTSSSST) the composition is skewed to low complexity. 2 positions are modified to phosphoserine: Ser748 and Ser758. Residues 754 to 763 (CVQQSPVASS) show a composition bias toward polar residues.

The protein belongs to the protein kinase superfamily. CMGC Ser/Thr protein kinase family. MNB/DYRK subfamily. Interacts with RAD54L2/ARIP4. Interacts with CRY2. Interacts with RANBP9. Interacts with WDR68. Interacts with SIRT1. Can also autophosphorylate on serine and threonine residues (in vitro). Autophosphorylated on numerous tyrosine residues. Detected in brain (at protein level). Ubiquitous.

Its subcellular location is the nucleus speckle. The catalysed reaction is L-seryl-[protein] + ATP = O-phospho-L-seryl-[protein] + ADP + H(+). The enzyme catalyses L-threonyl-[protein] + ATP = O-phospho-L-threonyl-[protein] + ADP + H(+). It catalyses the reaction L-tyrosyl-[protein] + ATP = O-phospho-L-tyrosyl-[protein] + ADP + H(+). It carries out the reaction [DNA-directed RNA polymerase] + ATP = phospho-[DNA-directed RNA polymerase] + ADP + H(+). With respect to regulation, inhibited by RANBP9. Inhibited by harmine, leucettamine B and leucettine L41. In terms of biological role, dual-specificity kinase which possesses both serine/threonine and tyrosine kinase activities. Exhibits a substrate preference for proline at position P+1 and arginine at position P-3. Plays an important role in double-strand breaks (DSBs) repair following DNA damage. Mechanistically, phosphorylates RNF169 and increases its ability to block accumulation of TP53BP1 at the DSB sites thereby promoting homologous recombination repair (HRR). Also acts as a positive regulator of transcription by acting as a CTD kinase that mediates phosphorylation of the CTD (C-terminal domain) of the large subunit of RNA polymerase II (RNAP II) POLR2A. May play a role in a signaling pathway regulating nuclear functions of cell proliferation. Modulates alternative splicing by phosphorylating the splice factor SRSF6. Has pro-survival function and negatively regulates the apoptotic process. Promotes cell survival upon genotoxic stress through phosphorylation of SIRT1. This in turn inhibits p53/TP53 activity and apoptosis. Phosphorylates SEPTIN4, SEPTIN5 and SF3B1 at 'Thr-434'. This is Dual specificity tyrosine-phosphorylation-regulated kinase 1A (Dyrk1a) from Rattus norvegicus (Rat).